A 211-amino-acid chain; its full sequence is SsrA-binding protein (211 aa).

Residues 168 to 211 form a disordered region; that stretch reads KHRLRRPRAQRNTQRSVTPRRTRENKNVRGSKARSARRNVRREN. Residues 177-186 show a composition bias toward polar residues; it reads QRNTQRSVTP. Residues 196–211 are compositionally biased toward basic residues; it reads RGSKARSARRNVRREN.

Belongs to the SmpB family.

The protein localises to the cytoplasm. In terms of biological role, required for rescue of stalled ribosomes mediated by trans-translation. Binds to transfer-messenger RNA (tmRNA), required for stable association of tmRNA with ribosomes. tmRNA and SmpB together mimic tRNA shape, replacing the anticodon stem-loop with SmpB. tmRNA is encoded by the ssrA gene; the 2 termini fold to resemble tRNA(Ala) and it encodes a 'tag peptide', a short internal open reading frame. During trans-translation Ala-aminoacylated tmRNA acts like a tRNA, entering the A-site of stalled ribosomes, displacing the stalled mRNA. The ribosome then switches to translate the ORF on the tmRNA; the nascent peptide is terminated with the 'tag peptide' encoded by the tmRNA and targeted for degradation. The ribosome is freed to recommence translation, which seems to be the essential function of trans-translation. The chain is SsrA-binding protein from Tropheryma whipplei (strain Twist) (Whipple's bacillus).